We begin with the raw amino-acid sequence, 138 residues long: Small ribosomal subunit protein uS11c (138 aa).

The protein belongs to the universal ribosomal protein uS11 family. In terms of assembly, part of the 30S ribosomal subunit.

Its subcellular location is the plastid. It is found in the chloroplast. The chain is Small ribosomal subunit protein uS11c from Morus indica (Mulberry).